A 144-amino-acid polypeptide reads, in one-letter code: Urease subunit beta (144 aa).

Belongs to the urease beta subunit family. In terms of assembly, heterotrimer of UreA (gamma), UreB (beta) and UreC (alpha) subunits. Three heterotrimers associate to form the active enzyme.

The protein localises to the cytoplasm. The enzyme catalyses urea + 2 H2O + H(+) = hydrogencarbonate + 2 NH4(+). It participates in nitrogen metabolism; urea degradation; CO(2) and NH(3) from urea (urease route): step 1/1. The protein is Urease subunit beta of Yersinia pseudotuberculosis serotype O:1b (strain IP 31758).